We begin with the raw amino-acid sequence, 217 residues long: Oxygen-insensitive NAD(P)H nitroreductase (217 aa).

An FMN-binding site is contributed by 10–14; that stretch reads RYSTK. NAD(+)-binding residues include Lys14, Thr41, Asn71, Lys74, and Arg107. Asn71 contacts FMN. FMN-binding positions include 165–166 and 205–207; these read EG and KSR.

This sequence belongs to the nitroreductase family. In terms of assembly, homodimer. Requires FMN as cofactor.

Functionally, reduction of a variety of nitroaromatic compounds using NADH (and to lesser extent NADPH) as source of reducing equivalents; two electrons are transferred. Capable of reducing nitrofurazone. The protein is Oxygen-insensitive NAD(P)H nitroreductase of Salmonella typhimurium (strain LT2 / SGSC1412 / ATCC 700720).